Reading from the N-terminus, the 341-residue chain is Mitochondrial glutathione transporter SLC25A40 (341 aa).

Solcar repeat units follow at residues 14–132 (ITPS…LRDI), 140–224 (RAEI…VKQS), and 234–328 (PTFA…GKSF). 6 helical membrane-spanning segments follow: residues 20 to 40 (MIAS…LDVV), 104 to 124 (LWSG…IYFT), 143 to 163 (IASL…ISPL), 200 to 221 (WGPT…YELV), 236 to 256 (FAIS…VTLP), and 299 to 319 (GLFA…AIMI).

The protein belongs to the mitochondrial carrier (TC 2.A.29) family.

The protein resides in the mitochondrion inner membrane. The enzyme catalyses glutathione(in) = glutathione(out). Probable mitochondrial transporter required for glutathione import into mitochondria. Glutathione, which plays key roles in oxidative metabolism, is produced exclusively in the cytosol and is imported in many organelles. Mitochondrial glutathione is required for the activity and stability of proteins containing iron-sulfur clusters. The chain is Mitochondrial glutathione transporter SLC25A40 from Xenopus tropicalis (Western clawed frog).